We begin with the raw amino-acid sequence, 126 residues long: FCS-Like Zinc finger 17 (126 aa).

An FLZ-type zinc finger spans residues 41–85 (CFLKTCHLCNKQLHQDKDVYMYRGDLGFCSRECRESQMLIDDRKE).

This sequence belongs to the FLZ family. Interacts with KIN10 and KIN11 via its FLZ-type zinc finger domain. Forms heterodimer with FLZ2 in vitro.

The protein resides in the nucleus. It localises to the cytoplasm. May act as an adapter to facilitate the interaction of SnRK1 complex with effector proteins, conferring tissue- and stimulus-type specific differences in the SnRK1 regulation pathway. This Arabidopsis thaliana (Mouse-ear cress) protein is FCS-Like Zinc finger 17.